A 177-amino-acid polypeptide reads, in one-letter code: Large ribosomal subunit protein uL6 (177 aa).

It belongs to the universal ribosomal protein uL6 family. In terms of assembly, part of the 50S ribosomal subunit.

In terms of biological role, this protein binds to the 23S rRNA, and is important in its secondary structure. It is located near the subunit interface in the base of the L7/L12 stalk, and near the tRNA binding site of the peptidyltransferase center. This chain is Large ribosomal subunit protein uL6, found in Bordetella petrii (strain ATCC BAA-461 / DSM 12804 / CCUG 43448).